The primary structure comprises 62 residues: Large ribosomal subunit protein bL32 (62 aa).

It belongs to the bacterial ribosomal protein bL32 family.

This Treponema pallidum (strain Nichols) protein is Large ribosomal subunit protein bL32 (rpmF).